The chain runs to 258 residues: 4-hydroxy-2-oxovalerate aldolase (258 aa).

The Proton acceptor role is filled by H48. Residue Q149 participates in substrate binding. E151 contributes to the Mg(2+) binding site. Substrate contacts are provided by A176 and D177. Position 177 (D177) interacts with Mg(2+).

This sequence belongs to the HpcH/HpaI aldolase family.

The enzyme catalyses (S)-4-hydroxy-2-oxopentanoate = acetaldehyde + pyruvate. Its pathway is xenobiotic degradation; biphenyl degradation. In terms of biological role, catalyzes the reversible retro-aldol cleavage of 4-hydroxy-2-oxovalerate to pyruvate and acetaldehyde. In Rhodococcus jostii (strain RHA1), this protein is 4-hydroxy-2-oxovalerate aldolase (bphF).